We begin with the raw amino-acid sequence, 621 residues long: tRNA uridine 5-carboxymethylaminomethyl modification enzyme MnmG (621 aa).

9–14 contacts FAD; that stretch reads GGGHAG. 270–284 lines the NAD(+) pocket; the sequence is GPRYCPSIEDKIVKF.

It belongs to the MnmG family. In terms of assembly, homodimer. Heterotetramer of two MnmE and two MnmG subunits. The cofactor is FAD.

The protein localises to the cytoplasm. In terms of biological role, NAD-binding protein involved in the addition of a carboxymethylaminomethyl (cmnm) group at the wobble position (U34) of certain tRNAs, forming tRNA-cmnm(5)s(2)U34. The protein is tRNA uridine 5-carboxymethylaminomethyl modification enzyme MnmG of Borreliella burgdorferi (strain ATCC 35210 / DSM 4680 / CIP 102532 / B31) (Borrelia burgdorferi).